The sequence spans 326 residues: MSQYVVCALYKFVELENYQELREPLLALMEAHGVHGTLLLASEGINGTVAAKREGIDTLLAWLNDEPRLNGIVYKESYSDTQPFNRTKVKLKKEIVTLGVEGIDPRHVVGTYVKPQDWNDLIADPEVFVVDTRNDYEIEIGTFKGAVNPNTDTFREFPDYVKQNMDPEKHKKVAMFCTGGIRCEKSTAYMKEQGFDEVYHLEGGILKYLEEVPEEESMWEGDCYVFDGRVAVNHQLEKADYDLCNACRLPITEEDKRSEQFEQGVSCPKCFGKHSEEQVARFREREKQVSLAAVRGEQHVGGESAKQRQQRRAEKLAKKDVQRKQA.

A Rhodanese domain is found at 123–217 (ADPEVFVVDT…YLEEVPEEES (95 aa)). Cysteine 177 acts as the Cysteine persulfide intermediate in catalysis. A disordered region spans residues 293–326 (AVRGEQHVGGESAKQRQQRRAEKLAKKDVQRKQA). Basic and acidic residues predominate over residues 311–326 (RRAEKLAKKDVQRKQA).

This sequence belongs to the TrhO family.

It carries out the reaction uridine(34) in tRNA + AH2 + O2 = 5-hydroxyuridine(34) in tRNA + A + H2O. Catalyzes oxygen-dependent 5-hydroxyuridine (ho5U) modification at position 34 in tRNAs. This Vibrio campbellii (strain ATCC BAA-1116) protein is tRNA uridine(34) hydroxylase.